Consider the following 687-residue polypeptide: MSARYPLLNRELGILGFNERVLAQAADPQVPLLERLRFICITSSNLDEFFEVRMAGLQEQIRDNPGALTPDGMSLQHAYDLVVERAQRLVHRQYTMLHETVLPALEQEGIYFHASDTWNDAQLEWARGYFLDELLPVLTPIGLDPAHPFPRVLNKSLNFVVELEGRDAFGRQAVMGIVQAPRALPRVVRMPQSLSGFEHGFVLLSSFMQRFVGELFPQLVVKSCNQFRITRNSELFVDEDEITNLRVALQGELPARHLGNAVRLEVSADTPAHIVRRLLDESSLGDKDCYRVAGSVNLVRLMQIPDLVDRPDLKFAPFVASIPPAIANAPTMFDAIDAGDILLHHPYESFQPVLELLQQAAKDPSVVAIKQTIYRTGTDSPLMDALMEAARNGKEVTVVVELLARFDEETNINWASQLEAVGAHVVYGVVGHKCHAKMMLIVRRVVEGGKATLRRYVHLGTGNYHPRTARLYTDFGLMTADQKICEDVHHVFQQLTGIGGELTLHELWQSPFTLHPRIIDSIRAEIDNARAGKRARIVAKMNALLEPSVIAALYEASQAGVKVDLIVRGVCALKPGVPGLSENITVRSIVGRFLEHHRIYYFHAGGAEEVYLSSADWMDRNLFRRVEVAFPIRARKLKRRVIAEGLSVCLGDNQSAWLMQSDGHYRRRRAGKTVRNAQLGLLAKFCS.

Position 45 (Asn-45) interacts with ATP. Residues Arg-375 and Arg-405 each coordinate Mg(2+). His-435 (phosphohistidine intermediate) is an active-site residue. Residues Tyr-472, Arg-568, and His-596 each contribute to the ATP site.

Belongs to the polyphosphate kinase 1 (PPK1) family. It depends on Mg(2+) as a cofactor. Post-translationally, an intermediate of this reaction is the autophosphorylated ppk in which a phosphate is covalently linked to a histidine residue through a N-P bond.

The catalysed reaction is [phosphate](n) + ATP = [phosphate](n+1) + ADP. In terms of biological role, catalyzes the reversible transfer of the terminal phosphate of ATP to form a long-chain polyphosphate (polyP). This is Polyphosphate kinase from Burkholderia vietnamiensis (strain G4 / LMG 22486) (Burkholderia cepacia (strain R1808)).